Consider the following 203-residue polypeptide: MFKILKQVGDYAKDAAQAAKYIGQGLSVTFDHMRRRPVTVQYPYEKLIPSERFRGRIHFEFDKCIACEVCVRVCPINLPVVDWEFDKSIKKKTLKHYSIDFGVCIFCGNCVEYCPTNCLSMTEEYELATYDRHELNYDNVALGRLPYKVTQDPMVTPLRELAYLPQGVIDPHDLPQGSQRAGEHPEDILERLQAEKQQETADQ.

4Fe-4S ferredoxin-type domains are found at residues G55 to E84 and K95 to E124. 8 residues coordinate [4Fe-4S] cluster: C64, C67, C70, C74, C104, C107, C110, and C114.

The protein belongs to the complex I 23 kDa subunit family. NDH-1 is composed of at least 11 different subunits. Requires [4Fe-4S] cluster as cofactor.

It is found in the cellular thylakoid membrane. It catalyses the reaction a plastoquinone + NADH + (n+1) H(+)(in) = a plastoquinol + NAD(+) + n H(+)(out). The catalysed reaction is a plastoquinone + NADPH + (n+1) H(+)(in) = a plastoquinol + NADP(+) + n H(+)(out). NDH-1 shuttles electrons from an unknown electron donor, via FMN and iron-sulfur (Fe-S) centers, to quinones in the respiratory and/or the photosynthetic chain. The immediate electron acceptor for the enzyme in this species is believed to be plastoquinone. Couples the redox reaction to proton translocation, and thus conserves the redox energy in a proton gradient. The protein is NAD(P)H-quinone oxidoreductase subunit I (ndhI) of Picosynechococcus sp. (strain ATCC 27264 / PCC 7002 / PR-6) (Agmenellum quadruplicatum).